Consider the following 843-residue polypeptide: KN motif and ankyrin repeat domain-containing protein 2 (843 aa).

The segment at 1 to 31 (MAQVLHVPAPFPGTPGQASPAAFPSKEPDPP) is disordered. Residues 1-72 (MAQVLHVPAP…AVQRRPRLGS (72 aa)) form an interaction with AIFM1 region. S19, S83, S86, S89, and S92 each carry phosphoserine. R105 carries the omega-N-methylarginine modification. The tract at residues 161 to 182 (LAGVGLLPPTPRSSGLSTPVAP) is disordered. T170 carries the post-translational modification Phosphothreonine. 2 coiled-coil regions span residues 183–234 (SAGH…QLKS) and 282–313 (DGEAALVAKVAVLETQLKKALQELRAAQTQQV). Position 331 is a phosphothreonine (T331). S358 is subject to Phosphoserine. The tract at residues 410–577 (TERSCTGAPR…VASGPDPEEE (168 aa)) is disordered. Residues 457–470 (AAASQDSQAADGAG) are compositionally biased toward low complexity. S532 carries the phosphoserine modification. A compositionally biased stretch (polar residues) spans 547 to 561 (ATTSLEGPQLSQESQ). One copy of the ANK 0; degenerate repeat lies at 606 to 643 (RELKVAYTTVLQEWLRLACRSDAHPELVRRHLVTFRAM). Positions 661 to 827 (TALHYSVSHA…YSRMNIKCSF (167 aa)) are interaction with NCOA1. ANK repeat units lie at residues 673-703 (PVVRQLLDSGVCHVDKLNRAGYSPIMLTALA), 707-740 (TQDDIETILQLFRLGNVNAKASQAGQTALMLAVS), 745-774 (DVVRALLACEADVNIQDEDGSTALMCACEH), 778-808 (EITGLLLAVPSCDISLTDRDGSTALMVALDA), and 812-842 (EIASMLYSRMNIKCSFAPMSDYESPASSSAE).

Interacts (non-phosphorylated form) with NCOA1; NCOA2 AND NCOA3. Interacts with AIFM1. Interacts with ARHGDIA; the interaction is direct and may regulate the interaction of ARHGDIA with RHOA, RAC1 and CDC42. Interacts (via ANK repeats 1-5) with KIF21A (via residues 1148-1169). Phosphorylated by casein kinase II upon estrogen stimulation. Phosphorylation induces the release by KANK2 of NCOA1 and its translocation to the nucleus where NCOA1 can activate gene transcription. As to expression, widely expressed with highest levels in liver and skeletal muscle.

It is found in the cytoplasm. The protein resides in the mitochondrion. Functionally, involved in transcription regulation by sequestering in the cytoplasm nuclear receptor coactivators such as NCOA1, NCOA2 and NCOA3. Involved in regulation of caspase-independent apoptosis by sequestering the proapoptotic factor AIFM1 in mitochondria. Pro-apoptotic stimuli can induce its proteasomal degradation allowing the translocation of AIFM1 to the nucleus to induce apoptosis. Involved in the negative control of vitamin D receptor signaling pathway. Involved in actin stress fibers formation through its interaction with ARHGDIA and the regulation of the Rho signaling pathway. May thereby play a role in cell adhesion and migration, regulating for instance podocytes migration during development of the kidney. Through the Rho signaling pathway may also regulate cell proliferation. The protein is KN motif and ankyrin repeat domain-containing protein 2 (Kank2) of Mus musculus (Mouse).